A 238-amino-acid polypeptide reads, in one-letter code: Histidine/lysine/arginine/ornithine transport system permease protein HisM (238 aa).

The Periplasmic segment spans residues 1-26 (MIEILHEYWKPLLWTDGYRFTGVAIT). The 199-residue stretch at 23–221 (VAITLWLLIL…IISYVLISLF (199 aa)) folds into the ABC transmembrane type-1 domain. A helical transmembrane segment spans residues 27–47 (LWLLILSVVIGGVLALFLAIG). Residues 48–58 (RVSSNKYIQFP) are Cytoplasmic-facing. A helical membrane pass occupies residues 59-79 (IWLFTYIFRGTPLYVQLLVFY). The Periplasmic portion of the chain corresponds to 80–104 (SGMYTLEIVKGTEFLNAFFRSGLNC). The helical transmembrane segment at 105–125 (TVLALTLNTCAYTTEIFAGAI) threads the bilayer. Residues 126-157 (RSVPHGEIEAARAYGFSTFKMYRCIILPSALR) lie on the Cytoplasmic side of the membrane. Residues 158-178 (IALPAYSNEVILMLHSTALAF) form a helical membrane-spanning segment. Residues 179-199 (TATVPDLLKIARDINAATYQP) lie on the Periplasmic side of the membrane. A helical transmembrane segment spans residues 200–220 (FTAFGIAAVLYLIISYVLISL). Residues 221–238 (FRRAEKRWLQHVKPSSTH) are Cytoplasmic-facing.

The protein belongs to the binding-protein-dependent transport system permease family. HisMQ subfamily. As to quaternary structure, the HisPMQJ complex is composed of two ATP-binding proteins (HisP), two transmembrane proteins (HisM and HisQ) and a solute-binding protein (HisJ). The HisPMQ-ArgT complex is composed of two ATP-binding proteins (HisP), two transmembrane proteins (HisM and HisQ) and a solute-binding protein (ArgT).

It localises to the cell inner membrane. Its function is as follows. Part of the ABC transporter complex HisPMQJ involved in histidine transport. Is also part of the ABC transporter complex HisPMQ-ArgT involved in lysine/arginine/ornithine transport. Probably responsible for the translocation of the substrate across the membrane. The protein is Histidine/lysine/arginine/ornithine transport system permease protein HisM (hisM) of Escherichia coli O157:H7.